The following is a 791-amino-acid chain: Putative DNA (cytosine-5)-methyltransferase CMT1 (791 aa).

Residues 37 to 59 (YQSKKTKLQAPTKKPANKGGKKE) form a disordered region. One can recognise a BAH domain in the interval 79 to 199 (VLINLNDDVY…VPYLNFTSAD (121 aa)). Residues 225 to 768 (KFLLDLYSGC…YAFGMASQGL (544 aa)) form the SAM-dependent MTase C5-type domain. Positions 308–333 (VESISELEDEEVEENDDIDEASTGAE) form a coiled coil. Residues 339-404 (FEVEKFLGIM…DGFKSHLLPL (66 aa)) form the Chromo domain. The active site involves Cys-417.

The protein belongs to the class I-like SAM-binding methyltransferase superfamily. C5-methyltransferase family. Expressed in flowers. Not detected in leaves, roots, seedlings and plants prior formation of flower buds.

It is found in the nucleus. It carries out the reaction a 2'-deoxycytidine in DNA + S-adenosyl-L-methionine = a 5-methyl-2'-deoxycytidine in DNA + S-adenosyl-L-homocysteine + H(+). Its function is as follows. May be involved in the CpXpG methylation and in gene silencing. The protein is Putative DNA (cytosine-5)-methyltransferase CMT1 (CMT1) of Arabidopsis thaliana (Mouse-ear cress).